Reading from the N-terminus, the 494-residue chain is Guanosine-5'-triphosphate,3'-diphosphate pyrophosphatase (494 aa).

The protein belongs to the GppA/Ppx family. GppA subfamily.

It catalyses the reaction guanosine 3'-diphosphate 5'-triphosphate + H2O = guanosine 3',5'-bis(diphosphate) + phosphate + H(+). It participates in purine metabolism; ppGpp biosynthesis; ppGpp from GTP: step 2/2. Catalyzes the conversion of pppGpp to ppGpp. Guanosine pentaphosphate (pppGpp) is a cytoplasmic signaling molecule which together with ppGpp controls the 'stringent response', an adaptive process that allows bacteria to respond to amino acid starvation, resulting in the coordinated regulation of numerous cellular activities. This is Guanosine-5'-triphosphate,3'-diphosphate pyrophosphatase from Shigella dysenteriae serotype 1 (strain Sd197).